Here is a 180-residue protein sequence, read N- to C-terminus: Large ribosomal subunit protein uL5 (180 aa).

Belongs to the universal ribosomal protein uL5 family. Part of the 50S ribosomal subunit; part of the 5S rRNA/L5/L18/L25 subcomplex. Contacts the 5S rRNA and the P site tRNA. Forms a bridge to the 30S subunit in the 70S ribosome.

This is one of the proteins that bind and probably mediate the attachment of the 5S RNA into the large ribosomal subunit, where it forms part of the central protuberance. In the 70S ribosome it contacts protein S13 of the 30S subunit (bridge B1b), connecting the 2 subunits; this bridge is implicated in subunit movement. Contacts the P site tRNA; the 5S rRNA and some of its associated proteins might help stabilize positioning of ribosome-bound tRNAs. The sequence is that of Large ribosomal subunit protein uL5 from Polynucleobacter asymbioticus (strain DSM 18221 / CIP 109841 / QLW-P1DMWA-1) (Polynucleobacter necessarius subsp. asymbioticus).